The chain runs to 257 residues: Isoprenyl transferase (257 aa).

The active site involves aspartate 34. Aspartate 34 lines the Mg(2+) pocket. Residues 35 to 38 (GNGR), tryptophan 39, arginine 47, histidine 51, and 79 to 81 (STE) contribute to the substrate site. Residue asparagine 82 is the Proton acceptor of the active site. Substrate contacts are provided by residues tryptophan 83, arginine 85, arginine 202, and 208 to 210 (RLS). Glutamate 221 contributes to the Mg(2+) binding site.

This sequence belongs to the UPP synthase family. Homodimer. The cofactor is Mg(2+).

Catalyzes the condensation of isopentenyl diphosphate (IPP) with allylic pyrophosphates generating different type of terpenoids. This chain is Isoprenyl transferase, found in Geobacillus kaustophilus (strain HTA426).